The primary structure comprises 351 residues: Phosphoribosylformylglycinamidine cyclo-ligase (351 aa).

This sequence belongs to the AIR synthase family.

The protein localises to the cytoplasm. The catalysed reaction is 2-formamido-N(1)-(5-O-phospho-beta-D-ribosyl)acetamidine + ATP = 5-amino-1-(5-phospho-beta-D-ribosyl)imidazole + ADP + phosphate + H(+). Its pathway is purine metabolism; IMP biosynthesis via de novo pathway; 5-amino-1-(5-phospho-D-ribosyl)imidazole from N(2)-formyl-N(1)-(5-phospho-D-ribosyl)glycinamide: step 2/2. The chain is Phosphoribosylformylglycinamidine cyclo-ligase from Idiomarina loihiensis (strain ATCC BAA-735 / DSM 15497 / L2-TR).